The sequence spans 1020 residues: MEDMKPSTASTKNLHHDGVGENDTIEVRFTDFCKIGLSVSEDAYEEAIKLFKGTKHLLLANISAIGNGMPEEAERFWFAFVSYSVKRLSEKIRDNMQQRPDDNGLTLCQILRRAKLNIVDFFKELPQYVVKAGPILSTMYGVDWENRLEAKELQANFVHLSILSRHYKRAYRELFLTSDANVDKQSATAYMSDYHRFGWLLFLALRVHAFSRFKDLVTCTNGLVSVLAILIIHVPVRFRNFNLNDSQRFVKKGDKGVDLLASLCNKYDTSEDELRKTMEKTNNLIADILKKKPHMASEYKNENLDNINTDGLIYYEDLMEESSLRSSLDILEKDYEDAIRCKGELDERVFINEEDSLLGSGSLSGGAISVTGTKRKFDQISSPTKTITSPLSPHRSPASHTNGILGSTNSRMAATPVSTAMTTAKWLRTVISPLPSKPSPQLERFLASCDRDVTNDVIRRAHIILEAIFPSNALGERCVTGSLQSTNLMDNIWAEQRRLEALKLYYRVLEAMCTAEAQILHATNLTSLLTNERFHRCMLACSAELVLATHKTVTMLFPAVLERTGITAFDLSKVIESFIRHEESLPRELRRHLNSLEERLLESMVWEKGSSMYNSLTVARPSLSAEINRLGLLAEPMPSLDAIAVHINFSSGGLPPLSSVSKHEISPGQNGDIRSPKRPCTDYRSVLVERNSFTSPVKDRLLAFTNLKSKLPPPPLQSAFASPTRPNPGGGGETCAETGINIFFSKINKLAAVRINGMVERLQQSQQHIRENVYRLFQQVLSQQTSLFFNRHIDQIILCCFYGVAKISKVNLTFREIIYNYRKQPQCKPQVFRSVFVDWSSARHNGRTGQDHVDIITFYNEIFIPAAKPLLVEVGSAGITVKGSQVPEVNNNKDGQCPASPKVSPFPSLPDMSPKKVSAAHNVYVSPLRTSKMDALISHSSKSYYACVGESTHAYQSPSKDLTAINNRLNGNRNIRGSLNFDDVDVGLVSDSMVAKSLYLQNGSCASTSGAPLKTEQPDP.

Polar residues-rich tracts occupy residues 382-391 and 398-409; these read SPTKTITSPL and ASHTNGILGSTN. Residues 382–409 are disordered; that stretch reads SPTKTITSPLSPHRSPASHTNGILGSTN. The tract at residues 415-616 is domain A; sequence TPVSTAMTTA…EKGSSMYNSL (202 aa). The interval 415-869 is pocket; the sequence is TPVSTAMTTA…NEIFIPAAKP (455 aa). Residues 617–737 are spacer; that stretch reads TVARPSLSAE…PGGGGETCAE (121 aa). Residues 738 to 869 form a domain B region; that stretch reads TGINIFFSKI…NEIFIPAAKP (132 aa).

The protein belongs to the retinoblastoma protein (RB) family.

The protein resides in the nucleus. Regulator of biological processes that recruits a histone deacetylase to control gene transcription. May play a role in the entry into mitosis, negatively regulating the cell proliferation. Formation of stable complexes with geminiviridae replication-associated proteins may create a cellular environment which favors viral DNA replication. The chain is Retinoblastoma-related protein (RBR) from Ricinus communis (Castor bean).